Reading from the N-terminus, the 281-residue chain is ATP phosphoribosyltransferase (281 aa).

Belongs to the ATP phosphoribosyltransferase family. Long subfamily. It depends on Mg(2+) as a cofactor.

It is found in the cytoplasm. The catalysed reaction is 1-(5-phospho-beta-D-ribosyl)-ATP + diphosphate = 5-phospho-alpha-D-ribose 1-diphosphate + ATP. It functions in the pathway amino-acid biosynthesis; L-histidine biosynthesis; L-histidine from 5-phospho-alpha-D-ribose 1-diphosphate: step 1/9. With respect to regulation, feedback inhibited by histidine. Catalyzes the condensation of ATP and 5-phosphoribose 1-diphosphate to form N'-(5'-phosphoribosyl)-ATP (PR-ATP). Has a crucial role in the pathway because the rate of histidine biosynthesis seems to be controlled primarily by regulation of HisG enzymatic activity. This chain is ATP phosphoribosyltransferase, found in Corynebacterium aurimucosum (strain ATCC 700975 / DSM 44827 / CIP 107346 / CN-1) (Corynebacterium nigricans).